Here is an 881-residue protein sequence, read N- to C-terminus: Envelope glycoprotein gp160 (881 aa).

The N-terminal stretch at 1–19 is a signal peptide; that stretch reads MGCLGNQLLIAILLLSVYG. Topologically, residues 20–696 are extracellular; it reads IYCTQYVTVF…ASWIKYIQYG (677 aa). Asn-37 carries an N-linked (GlcNAc...) asparagine; by host glycan. Residues Cys-44 and Cys-57 are joined by a disulfide bond. 17 N-linked (GlcNAc...) asparagine; by host glycosylation sites follow: Asn-70, Asn-114, Asn-148, Asn-158, Asn-186, Asn-200, Asn-204, Asn-214, Asn-246, Asn-249, Asn-280, Asn-286, Asn-297, Asn-308, Asn-318, Asn-373, and Asn-379. 5 disulfide bridges follow: Cys-101-Cys-222, Cys-108-Cys-213, Cys-113-Cys-170, Cys-235-Cys-265, and Cys-245-Cys-257. A V1 region spans residues 113-169; sequence CNKSETDRWGLTKSSTTITTAAPTSAPVSEKIDMVNETSSCIAQNNCTGLEQEQMIS. The interval 170–213 is V2; the sequence is CKFTMTGLKRDKTKEYNETWYSTDLVCEQGNSTDNESRCYMNHC. The V3 stretch occupies residues 313–345; the sequence is CRRPGNKTVLPVTIMSGLVFHSQPLTDRPKQAW. Cys-313 and Cys-346 are joined by a disulfide. Disulfide bonds link Cys-397/Cys-461 and Cys-404/Cys-434. Positions 404-434 are V4; that stretch reads CKMNWFLNWVEDRDVTTQRPKERHRRNYVPC. 2 N-linked (GlcNAc...) asparagine; by host glycosylation sites follow: Asn-462 and Asn-478. The tract at residues 477-484 is V5; that stretch reads GNQTSITM. The segment at 528-548 is fusion peptide; the sequence is GVFVLGFLGFLATAGSAMGAA. Positions 591 to 607 are immunosuppression; sequence LQTRVTAIEKYLEDQAQ. N-linked (GlcNAc...) asparagine; by host glycosylation is found at Asn-627, Asn-636, and Asn-652. Positions 636–668 form a coiled coil; sequence NDTWQEWERKVDFLEENITALLEEAQIQQEKNM. The tract at residues 673–694 is MPER; binding to GalCer; sequence KLNSWDVFGNWFDLASWIKYIQ. Residues 697–717 form a helical membrane-spanning segment; sequence IYVVVGVILLRIVIYIVQMLA. Over 718–881 the chain is Cytoplasmic; it reads KLRQGYRPVF…IRQGLELTLL (164 aa). The YXXV motif; contains endocytosis signal signature appears at 723 to 726; the sequence is YRPV. The tract at residues 737–761 is disordered; sequence THTQQDPALPTREGKEGDGGEGGGN. The S-palmitoyl cysteine; by host moiety is linked to residue Cys-789. The Di-leucine internalization motif signature appears at 880 to 881; sequence LL.

In terms of assembly, the mature envelope protein (Env) consists of a homotrimer of non-covalently associated gp120-gp41 heterodimers. The resulting complex protrudes from the virus surface as a spike. Interacts with host CD4 and CCR5. Gp120 also interacts with the C-type lectins CD209/DC-SIGN and CLEC4M/DC-SIGNR (collectively referred to as DC-SIGN(R)). The mature envelope protein (Env) consists of a homotrimer of non-covalently associated gp120-gp41 heterodimers. The resulting complex protrudes from the virus surface as a spike. Specific enzymatic cleavages in vivo yield mature proteins. Envelope glycoproteins are synthesized as an inactive precursor that is heavily N-glycosylated and processed likely by host cell furin in the Golgi to yield the mature SU and TM proteins. The cleavage site between SU and TM requires the minimal sequence [KR]-X-[KR]-R. In terms of processing, palmitoylation of the transmembrane protein and of Env polyprotein (prior to its proteolytic cleavage) is essential for their association with host cell membrane lipid rafts. Palmitoylation is therefore required for envelope trafficking to classical lipid rafts, but not for viral replication.

Its subcellular location is the virion membrane. The protein localises to the host cell membrane. It localises to the host endosome membrane. The surface protein gp120 (SU) attaches the virus to the host lymphoid cell by binding to the primary receptor CD4. This interaction induces a structural rearrangement creating a high affinity binding site for a chemokine coreceptor like CCR5. This peculiar 2 stage receptor-interaction strategy allows gp120 to maintain the highly conserved coreceptor-binding site in a cryptic conformation, protected from neutralizing antibodies. These changes are transmitted to the transmembrane protein gp41 and are thought to activate its fusogenic potential by unmasking its fusion peptide. In terms of biological role, surface protein gp120 (SU) may target the virus to gut-associated lymphoid tissue (GALT) by binding host ITGA4/ITGB7 (alpha-4/beta-7 integrins), a complex that mediates T-cell migration to the GALT. Interaction between gp120 and ITGA4/ITGB7 would allow the virus to enter GALT early in the infection, infecting and killing most of GALT's resting CD4+ T-cells. This T-cell depletion is believed to be the major insult to the host immune system leading to AIDS. Its function is as follows. The surface protein gp120 is a ligand for CD209/DC-SIGN and CLEC4M/DC-SIGNR, which are respectively found on dendritic cells (DCs), and on endothelial cells of liver sinusoids and lymph node sinuses. These interactions allow capture of viral particles at mucosal surfaces by these cells and subsequent transmission to permissive cells. DCs are professional antigen presenting cells, critical for host immunity by inducing specific immune responses against a broad variety of pathogens. They act as sentinels in various tissues where they take up antigen, process it, and present it to T-cells following migration to lymphoid organs. SIV subverts the migration properties of dendritic cells to gain access to CD4+ T-cells in lymph nodes. Virus transmission to permissive T-cells occurs either in trans (without DCs infection, through viral capture and transmission), or in cis (following DCs productive infection, through the usual CD4-gp120 interaction), thereby inducing a robust infection. In trans infection, bound virions remain infectious over days and it is proposed that they are not degraded, but protected in non-lysosomal acidic organelles within the DCs close to the cell membrane thus contributing to the viral infectious potential during DCs' migration from the periphery to the lymphoid tissues. On arrival at lymphoid tissues, intact virions recycle back to DCs' cell surface allowing virus transmission to CD4+ T-cells. Virion capture also seems to lead to MHC-II-restricted viral antigen presentation, and probably to the activation of SIV-specific CD4+ cells. Functionally, the transmembrane protein gp41 (TM) acts as a class I viral fusion protein. Under the current model, the protein has at least 3 conformational states: pre-fusion native state, pre-hairpin intermediate state, and post-fusion hairpin state. During fusion of viral and target intracellular membranes, the coiled coil regions (heptad repeats) assume a trimer-of-hairpins structure, positioning the fusion peptide in close proximity to the C-terminal region of the ectodomain. The formation of this structure appears to drive apposition and subsequent fusion of viral and target cell membranes. Complete fusion occurs in host cell endosomes. The virus undergoes clathrin-dependent internalization long before endosomal fusion, thus minimizing the surface exposure of conserved viral epitopes during fusion and reducing the efficacy of inhibitors targeting these epitopes. Membranes fusion leads to delivery of the nucleocapsid into the cytoplasm. The envelope glycoprotein gp160 precursor down-modulates cell surface CD4 antigen by interacting with it in the endoplasmic reticulum and blocking its transport to the cell surface. In terms of biological role, the gp120-gp41 heterodimer allows rapid transcytosis of the virus through CD4 negative cells such as simple epithelial monolayers of the intestinal, rectal and endocervical epithelial barriers. Both gp120 and gp41 specifically recognize glycosphingolipids galactosyl-ceramide (GalCer) or 3' sulfo-galactosyl-ceramide (GalS) present in the lipid rafts structures of epithelial cells. Binding to these alternative receptors allows the rapid transcytosis of the virus through the epithelial cells. This transcytotic vesicle-mediated transport of virions from the apical side to the basolateral side of the epithelial cells does not involve infection of the cells themselves. The protein is Envelope glycoprotein gp160 (env) of Simian immunodeficiency virus (isolate K6W) (SIV-mac).